The chain runs to 241 residues: 2-C-methyl-D-erythritol 4-phosphate cytidylyltransferase (241 aa).

This sequence belongs to the IspD/TarI cytidylyltransferase family. IspD subfamily. Homodimer.

The catalysed reaction is 2-C-methyl-D-erythritol 4-phosphate + CTP + H(+) = 4-CDP-2-C-methyl-D-erythritol + diphosphate. The protein operates within isoprenoid biosynthesis; isopentenyl diphosphate biosynthesis via DXP pathway; isopentenyl diphosphate from 1-deoxy-D-xylulose 5-phosphate: step 2/6. Functionally, catalyzes the formation of 4-diphosphocytidyl-2-C-methyl-D-erythritol from CTP and 2-C-methyl-D-erythritol 4-phosphate (MEP). The chain is 2-C-methyl-D-erythritol 4-phosphate cytidylyltransferase from Yersinia pseudotuberculosis serotype IB (strain PB1/+).